The following is a 359-amino-acid chain: Mannonate dehydratase (359 aa).

Belongs to the mannonate dehydratase family. The cofactor is Fe(2+). It depends on Mn(2+) as a cofactor.

The catalysed reaction is D-mannonate = 2-dehydro-3-deoxy-D-gluconate + H2O. Its pathway is carbohydrate metabolism; pentose and glucuronate interconversion. Functionally, catalyzes the dehydration of D-mannonate. This is Mannonate dehydratase (uxuA) from Bacillus subtilis (strain 168).